The primary structure comprises 152 residues: MAAERSFIAIKPDGVQRGLVGEILGRFERKGFKLVGLKQLTPSRELAEQHYGVHKERPFFGGLVDFITSGPVVAMVWEGDGVITSARKMIGATKPLEAEPGTIRGDLAINIGRNVIHGSDAPETAEFEIGLWFNPSELSDWTPSDQTWRVEG.

The ATP site is built by Lys-11, Phe-59, Arg-87, Thr-93, Arg-104, and Asn-114. His-117 acts as the Pros-phosphohistidine intermediate in catalysis.

The protein belongs to the NDK family. As to quaternary structure, homotetramer. It depends on Mg(2+) as a cofactor.

The protein resides in the cytoplasm. The enzyme catalyses dZDP + ATP = dZTP + ADP. It catalyses the reaction a 2'-deoxyribonucleoside 5'-diphosphate + ATP = a 2'-deoxyribonucleoside 5'-triphosphate + ADP. The catalysed reaction is a ribonucleoside 5'-diphosphate + ATP = a ribonucleoside 5'-triphosphate + ADP. The protein operates within purine metabolism. Functionally, major role in the synthesis of nucleoside triphosphates other than ATP. The ATP gamma phosphate is transferred to the NDP beta phosphate via a ping-pong mechanism, using a phosphorylated active-site intermediate. Its function is as follows. (Microbial infection) Catalyzes the phosphorylation of dZDP to dZTP, when the bacterium is infected by a phage that produces the substrate for the synthesis of dZTP (2- amino-2'-deoxyadenosine 5'-triphosphate), which is then used by the phage as a DNA polymerase substrate. The protein is Nucleoside diphosphate kinase of Synechococcus sp. (strain CC9311).